The primary structure comprises 133 residues: Profilin-2 (133 aa).

A disulfide bridge links Cys-13 with Cys-117. Residues 83 to 99 (AVIRGKKGSGGITIKKT) carry the Involved in PIP2 interaction motif. The residue at position 113 (Thr-113) is a Phosphothreonine.

The protein belongs to the profilin family. As to quaternary structure, occurs in many kinds of cells as a complex with monomeric actin in a 1:1 ratio. Post-translationally, phosphorylated by MAP kinases.

Its subcellular location is the cytoplasm. The protein localises to the cytoskeleton. Binds to actin and affects the structure of the cytoskeleton. At high concentrations, profilin prevents the polymerization of actin, whereas it enhances it at low concentrations. The protein is Profilin-2 of Betula pendula (European white birch).